Reading from the N-terminus, the 236-residue chain is Demethylmenaquinone methyltransferase (236 aa).

S-adenosyl-L-methionine contacts are provided by residues Thr58, Asp79, and 106–107; that span reads NA.

This sequence belongs to the class I-like SAM-binding methyltransferase superfamily. MenG/UbiE family.

The catalysed reaction is a 2-demethylmenaquinol + S-adenosyl-L-methionine = a menaquinol + S-adenosyl-L-homocysteine + H(+). Its pathway is quinol/quinone metabolism; menaquinone biosynthesis; menaquinol from 1,4-dihydroxy-2-naphthoate: step 2/2. Functionally, methyltransferase required for the conversion of demethylmenaquinol (DMKH2) to menaquinol (MKH2). This is Demethylmenaquinone methyltransferase from Listeria welshimeri serovar 6b (strain ATCC 35897 / DSM 20650 / CCUG 15529 / CIP 8149 / NCTC 11857 / SLCC 5334 / V8).